The chain runs to 269 residues: Small ribosomal subunit protein uS2 (269 aa).

The disordered stretch occupies residues 224-269 (ANQGREDSEDVYSETENDTEETDEELVSEEDLKEFVENSEEESDEE). Over residues 230 to 269 (DSEDVYSETENDTEETDEELVSEEDLKEFVENSEEESDEE) the composition is skewed to acidic residues.

This sequence belongs to the universal ribosomal protein uS2 family.

The sequence is that of Small ribosomal subunit protein uS2 from Finegoldia magna (strain ATCC 29328 / DSM 20472 / WAL 2508) (Peptostreptococcus magnus).